The chain runs to 272 residues: MARLAAFDMDGTLLMPDHHLGEKTLSTLARLRERDITLTFATGRHALEMQHILGALSLDAYLITGNGTRVHSLEGELLHRDDLPADVAELVLYQQWDTRASMHIFNDDGWFTGKEIPALLQAFVYSGFRYQIIDVKKMPLGSVTKICFCGDHDDLTRLQIQLYEALGERAHLCFSATDCLEVLPVGCNKGAALTVLTQHLGLSLRDCMAFGDAMNDREMLGCVGSGFIMGNAMPQLRAELPHLPVIGHCRNQAVSHYLTHWLDYPHLPYSPE.

The active-site Nucleophile is the Asp8. 3 residues coordinate Mg(2+): Asp8, Asp10, and Asp212.

This sequence belongs to the HAD-like hydrolase superfamily. Cof family. It depends on Mg(2+) as a cofactor.

It catalyses the reaction 4-amino-2-methyl-5-(diphosphooxymethyl)pyrimidine + H2O = 4-amino-2-methyl-5-(phosphooxymethyl)pyrimidine + phosphate + H(+). Catalyzes the hydrolysis of 4-amino-2-methyl-5-hydroxymethylpyrimidine pyrophosphate (HMP-PP) to 4-amino-2-methyl-5-hydroxymethylpyrimidine phosphate (HMP-P). This chain is HMP-PP phosphatase, found in Escherichia coli O8 (strain IAI1).